Consider the following 265-residue polypeptide: Secreted RxLR effector protein 146 (265 aa).

A signal peptide spans 1–25 (MRYYTQVVAASLVATLAVVDSIVFA). The short motif at 32–50 (RFLRQDGATVTRGGKGEER) is the RxLR-dEER element. 2 N-linked (GlcNAc...) asparagine glycosylation sites follow: N71 and N148.

This sequence belongs to the RxLR effector family.

Its subcellular location is the secreted. The protein resides in the host nucleus. It is found in the host cytoplasm. Functionally, secreted effector that completely suppresses the host cell death induced by cell death-inducing proteins. The protein is Secreted RxLR effector protein 146 of Plasmopara viticola (Downy mildew of grapevine).